The sequence spans 348 residues: GTPase Obg (348 aa).

Positions 1-159 (MKFVDEVKVH…RELVLELKLM (159 aa)) constitute an Obg domain. Residues 160–331 (ADVGLVGLPN…LLSALVRILS (172 aa)) form the OBG-type G domain. GTP is bound by residues 166-173 (GLPNAGKS), 191-195 (FTTLI), 213-216 (DIPG), 283-286 (NKVD), and 312-314 (SAR). 2 residues coordinate Mg(2+): S173 and T193.

Belongs to the TRAFAC class OBG-HflX-like GTPase superfamily. OBG GTPase family. In terms of assembly, monomer. Mg(2+) is required as a cofactor.

It is found in the cytoplasm. In terms of biological role, an essential GTPase which binds GTP, GDP and possibly (p)ppGpp with moderate affinity, with high nucleotide exchange rates and a fairly low GTP hydrolysis rate. Plays a role in control of the cell cycle, stress response, ribosome biogenesis and in those bacteria that undergo differentiation, in morphogenesis control. The sequence is that of GTPase Obg from Syntrophobacter fumaroxidans (strain DSM 10017 / MPOB).